We begin with the raw amino-acid sequence, 469 residues long: 3-isopropylmalate dehydratase large subunit 1 (469 aa).

Residues Cys-344, Cys-404, and Cys-407 each contribute to the [4Fe-4S] cluster site.

The protein belongs to the aconitase/IPM isomerase family. LeuC type 1 subfamily. Heterodimer of LeuC and LeuD. [4Fe-4S] cluster serves as cofactor.

It catalyses the reaction (2R,3S)-3-isopropylmalate = (2S)-2-isopropylmalate. It participates in amino-acid biosynthesis; L-leucine biosynthesis; L-leucine from 3-methyl-2-oxobutanoate: step 2/4. Catalyzes the isomerization between 2-isopropylmalate and 3-isopropylmalate, via the formation of 2-isopropylmaleate. This Rubrobacter xylanophilus (strain DSM 9941 / JCM 11954 / NBRC 16129 / PRD-1) protein is 3-isopropylmalate dehydratase large subunit 1.